The primary structure comprises 98 residues: Ferredoxin-3 (98 aa).

4Fe-4S ferredoxin-type domains follow at residues 18-47 and 66-95; these read FVEA…LQAL and VMSI…HSPL. The [4Fe-4S] cluster site is built by C27, C30, C33, C37, C75, C78, C81, and C85.

Homodimer. [4Fe-4S] cluster serves as cofactor.

Functionally, ferredoxins are iron-sulfur proteins that transfer electrons in a wide variety of metabolic reactions. The protein is Ferredoxin-3 (fdxB) of Trichormus variabilis (strain ATCC 29413 / PCC 7937) (Anabaena variabilis).